The chain runs to 315 residues: Olfactory receptor 10H2 (315 aa).

Over Met1 to Leu25 the chain is Extracellular. Residue Asn5 is glycosylated (N-linked (GlcNAc...) asparagine). The chain crosses the membrane as a helical span at residues Met26–Met46. Residues Ala47 to Ser54 lie on the Cytoplasmic side of the membrane. The helical transmembrane segment at Leu55–Val75 threads the bilayer. Topologically, residues Ala76–Ser99 are extracellular. The cysteines at positions 97 and 189 are disulfide-linked. Residues Gln100–Tyr120 traverse the membrane as a helical segment. The Cytoplasmic portion of the chain corresponds to Asp121–Arg139. A helical membrane pass occupies residues Gly140–Thr160. Over Ser161–Ala197 the chain is Extracellular. The chain crosses the membrane as a helical span at residues Leu198–Ser218. Residues Tyr219 to Ala238 are Cytoplasmic-facing. A helical membrane pass occupies residues Phe239 to Ile259. The Extracellular portion of the chain corresponds to Tyr260–Asp272. A helical transmembrane segment spans residues Thr273 to Leu293. Topologically, residues Arg294 to Thr315 are cytoplasmic.

The protein belongs to the G-protein coupled receptor 1 family.

The protein resides in the cell membrane. Functionally, odorant receptor. The chain is Olfactory receptor 10H2 (OR10H2) from Homo sapiens (Human).